A 389-amino-acid chain; its full sequence is Gastricsin (389 aa).

An N-terminal signal peptide occupies residues 1–16 (MKWMVVALVCLQLLEA). Positions 17–59 (KVTKVTLKKFKSIRENLREQGLLEDFLKTNHYDPAQKYHFGDF) are cleaved as a propeptide — activation peptide. One can recognise a Peptidase A1 domain in the interval 73–386 (YFGEISIGTP…DMGNNRVGFA (314 aa)). The active site involves aspartate 91. 2 cysteine pairs are disulfide-bonded: cysteine 104–cysteine 109 and cysteine 268–cysteine 272. Aspartate 277 is an active-site residue. The cysteines at positions 311 and 344 are disulfide-linked.

It belongs to the peptidase A1 family.

It is found in the secreted. The catalysed reaction is More restricted specificity than pepsin A, but shows preferential cleavage at Tyr-|-Xaa bonds. High activity on hemoglobin.. In terms of biological role, hydrolyzes a variety of proteins. The polypeptide is Gastricsin (PGC) (Suncus murinus (Asian house shrew)).